The primary structure comprises 522 residues: Protein RCC2 (522 aa).

Residues 1-83 form a disordered region; sequence MPRKKAAAAA…TAGKAGGAAV (83 aa). Ser-16 is modified (phosphoserine). Thr-20 carries the phosphothreonine modification. Basic residues predominate over residues 24 to 36; sequence GPRKRGGPAGRKR. Phosphoserine is present on residues Ser-43, Ser-44, Ser-45, Ser-46, Ser-50, and Ser-51. The span at 71–82 shows a compositional bias: low complexity; that stretch reads RPATAGKAGGAA. N6-acetyllysine is present on residues Lys-92 and Lys-124. 7 RCC1 repeats span residues 103–165, 168–219, 221–271, 273–347, 348–401, 403–447, and 448–501; these read KGQL…SLLI, EGKL…ALTE, GSVF…IMDC, GNLY…VLDS, QKRV…AVSE, GGLF…VAAD, and ESTI…VIAR. Lys-293 carries the post-translational modification N6-acetyllysine. Positions 318 to 325 are required for interaction with RAC1; sequence KTKDGQIL. The residue at position 342 (Thr-342) is a Phosphothreonine. Position 377 is an N6-acetyllysine (Lys-377). Basic and acidic residues predominate over residues 502 to 515; that stretch reads DESETEKEKIKKLP. The disordered stretch occupies residues 502-522; that stretch reads DESETEKEKIKKLPEYNPRTL.

Interacts with RAC1. Interacts with nucleotide-free and with GDP and GTP-bound forms of RAC1, with a slight preference for GDP-bound RAC1. Binds preferentially to the nucleotide-free form of RAC1. Interacts with CORO1C. Interacts with microtubules.

The protein localises to the nucleus. The protein resides in the nucleolus. Its subcellular location is the cytoplasm. It localises to the cytoskeleton. It is found in the chromosome. The protein localises to the centromere. The protein resides in the spindle. Its subcellular location is the midbody. It localises to the cell membrane. Functionally, multifunctional protein that may affect its functions by regulating the activity of small GTPases, such as RAC1 and RALA. Required for normal progress through the cell cycle, both during interphase and during mitosis. Required for the presence of normal levels of MAD2L1, AURKB and BIRC5 on inner centromeres during mitosis, and for normal attachment of kinetochores to mitotic spindles. Required for normal organization of the microtubule cytoskeleton in interphase cells. Functions as guanine nucleotide exchange factor (GEF) for RALA. Interferes with the activation of RAC1 by guanine nucleotide exchange factors. Prevents accumulation of active, GTP-bound RAC1, and suppresses RAC1-mediated reorganization of the actin cytoskeleton and formation of membrane protrusions. Required for normal cellular responses to contacts with the extracellular matrix of adjacent cells, and for directional cell migration in response to a fibronectin gradient (in vitro). The sequence is that of Protein RCC2 (RCC2) from Homo sapiens (Human).